Reading from the N-terminus, the 372-residue chain is Fatty acid 2-hydroxylase (372 aa).

A Cytochrome b5 heme-binding domain is found at 8-86; it reads AASFSPSEVQ…LEQYYVGELR (79 aa). Residues His43 and His69 each contribute to the heme site. The next 2 helical transmembrane spans lie at 168–188 and 213–233; these read VWYSVPIIWVPLVLYLSWSYY and SMFPGLFMLGIFLWSLIEYLI. The 143-residue stretch at 219–361 folds into the Fatty acid hydroxylase domain; sequence FMLGIFLWSL…TKLWDYCFHT (143 aa). Positions 234, 239, 257, 260, and 261 each coordinate Zn(2+). The next 2 helical transmembrane spans lie at 271 to 291 and 292 to 312; these read VFPPVPASLVIGVFYLCLQLI and LPEAVGGTVFAGGLLGYVLYD. Zn(2+)-binding residues include His315, His319, His336, His339, and His340.

The protein belongs to the sterol desaturase family. SCS7 subfamily. Zn(2+) is required as a cofactor.

The protein resides in the endoplasmic reticulum membrane. It is found in the microsome membrane. The catalysed reaction is a 1,2-saturated fatty acid + 2 Fe(II)-[cytochrome b5] + O2 + 2 H(+) = a (R)-2-hydroxy fatty acid + 2 Fe(III)-[cytochrome b5] + H2O. The enzyme catalyses hexadecanoate + 2 Fe(II)-[cytochrome b5] + O2 + 2 H(+) = (R)-2-hydroxyhexadecanoate + 2 Fe(III)-[cytochrome b5] + H2O. It catalyses the reaction octadecanoate + 2 Fe(II)-[cytochrome b5] + O2 + 2 H(+) = (R)-2-hydroxyoctadecanoate + 2 Fe(III)-[cytochrome b5] + H2O. It carries out the reaction docosanoate + 2 Fe(II)-[cytochrome b5] + O2 + 2 H(+) = 2-hydroxydocosanoate + 2 Fe(III)-[cytochrome b5] + H2O. The catalysed reaction is tetracosanoate + 2 Fe(II)-[cytochrome b5] + O2 + 2 H(+) = (R)-2-hydroxytetracosanoate + 2 Fe(III)-[cytochrome b5] + H2O. The protein operates within lipid metabolism; fatty acid metabolism. It participates in sphingolipid metabolism; galactosylceramide biosynthesis. Catalyzes the hydroxylation of free fatty acids at the C-2 position to produce 2-hydroxy fatty acids, which are building blocks of sphingolipids and glycosphingolipids common in neural tissue and epidermis. FA2H is stereospecific for the production of (R)-2-hydroxy fatty acids. Plays an essential role in the synthesis of galactosphingolipids of the myelin sheath. Responsible for the synthesis of sphingolipids and glycosphingolipids involved in the formation of epidermal lamellar bodies critical for skin permeability barrier. Participates in the synthesis of glycosphingolipids and a fraction of type II wax diesters in sebaceous gland, specifically regulating hair follicle homeostasis. Involved in the synthesis of sphingolipids of plasma membrane rafts, controlling lipid raft mobility and trafficking of raft-associated proteins. The chain is Fatty acid 2-hydroxylase (FA2H) from Macaca fascicularis (Crab-eating macaque).